The chain runs to 279 residues: uncharacterized protein (279 aa).

Transmembrane regions (helical) follow at residues 1 to 21 (MGFI…LCGI), 38 to 58 (FACH…SVVA), and 131 to 151 (SLRY…VFID).

It belongs to the 1-acyl-sn-glycerol-3-phosphate acyltransferase family.

It is found in the endoplasmic reticulum membrane. This is an uncharacterized protein from Schizosaccharomyces pombe (strain 972 / ATCC 24843) (Fission yeast).